Here is a 556-residue protein sequence, read N- to C-terminus: General transcription factor IIF subunit 1 (556 aa).

Disordered regions lie at residues 82 to 128 (TMTS…PAAA) and 226 to 499 (SRLQ…PFTE). Over residues 84–128 (TSAPNGTNSTGTTPNTTTTTTTTTTTTTTTTTAAGTPGAPNPAAA) the composition is skewed to low complexity. Over residues 245–275 (SGKKSIEELEEAEHRNRNEDPNRYKTTNEEK) the composition is skewed to basic and acidic residues. 2 stretches are compositionally biased toward acidic residues: residues 291–338 (GNGE…DVDL) and 378–394 (GDDE…DQDD). Basic and acidic residues-rich tracts occupy residues 415 to 427 (VKKE…DSKS) and 450 to 461 (NKSDSSVDNRES). The segment covering 469-492 (SSPQAVQPNSPSQQQQQQQQNIDP) has biased composition (low complexity).

This sequence belongs to the TFIIF alpha subunit family. As to quaternary structure, heterodimer of an alpha and a beta subunit.

It localises to the nucleus. Its function is as follows. TFIIF is a general transcription initiation factor that binds to RNA polymerase II and helps to recruit it to the initiation complex in collaboration with TFIIB. It promotes transcription elongation. In Dictyostelium discoideum (Social amoeba), this protein is General transcription factor IIF subunit 1 (gtf2f1).